The sequence spans 445 residues: Argininosuccinate synthase (445 aa).

ATP-binding positions include 17-25 and Ala43; that span reads AFSGGLDTS. Position 99 (Tyr99) interacts with L-citrulline. The ATP site is built by Gly129 and Thr131. Thr131, Asn135, and Asp136 together coordinate L-aspartate. Asn135 provides a ligand contact to L-citrulline. Residue Asp136 coordinates ATP. L-citrulline is bound by residues Arg139 and Ser192. Position 194 (Asp194) interacts with ATP. 3 residues coordinate L-citrulline: Thr201, Glu203, and Glu280.

This sequence belongs to the argininosuccinate synthase family. Type 2 subfamily. Homotetramer.

It is found in the cytoplasm. The enzyme catalyses L-citrulline + L-aspartate + ATP = 2-(N(omega)-L-arginino)succinate + AMP + diphosphate + H(+). Its pathway is amino-acid biosynthesis; L-arginine biosynthesis; L-arginine from L-ornithine and carbamoyl phosphate: step 2/3. The polypeptide is Argininosuccinate synthase (argG) (Ralstonia nicotianae (strain ATCC BAA-1114 / GMI1000) (Ralstonia solanacearum)).